A 303-amino-acid chain; its full sequence is Glycine--tRNA ligase alpha subunit (303 aa).

The protein belongs to the class-II aminoacyl-tRNA synthetase family. Tetramer of two alpha and two beta subunits.

Its subcellular location is the cytoplasm. The enzyme catalyses tRNA(Gly) + glycine + ATP = glycyl-tRNA(Gly) + AMP + diphosphate. The chain is Glycine--tRNA ligase alpha subunit from Methylobacterium radiotolerans (strain ATCC 27329 / DSM 1819 / JCM 2831 / NBRC 15690 / NCIMB 10815 / 0-1).